The following is a 145-amino-acid chain: D-aminoacyl-tRNA deacylase (145 aa).

The short motif at 137–138 (GP) is the Gly-cisPro motif, important for rejection of L-amino acids element.

Belongs to the DTD family. Homodimer.

The protein localises to the cytoplasm. The catalysed reaction is glycyl-tRNA(Ala) + H2O = tRNA(Ala) + glycine + H(+). The enzyme catalyses a D-aminoacyl-tRNA + H2O = a tRNA + a D-alpha-amino acid + H(+). Its function is as follows. An aminoacyl-tRNA editing enzyme that deacylates mischarged D-aminoacyl-tRNAs. Also deacylates mischarged glycyl-tRNA(Ala), protecting cells against glycine mischarging by AlaRS. Acts via tRNA-based rather than protein-based catalysis; rejects L-amino acids rather than detecting D-amino acids in the active site. By recycling D-aminoacyl-tRNA to D-amino acids and free tRNA molecules, this enzyme counteracts the toxicity associated with the formation of D-aminoacyl-tRNA entities in vivo and helps enforce protein L-homochirality. The sequence is that of D-aminoacyl-tRNA deacylase from Pseudomonas aeruginosa (strain UCBPP-PA14).